A 200-amino-acid polypeptide reads, in one-letter code: Ribonuclease HII (200 aa).

The RNase H type-2 domain maps to 1–200; it reads MRYGGVDEAG…EINKKLTDFI (200 aa). 3 residues coordinate a divalent metal cation: D7, E8, and D99.

The protein belongs to the RNase HII family. Mn(2+) is required as a cofactor. It depends on Mg(2+) as a cofactor.

The protein resides in the cytoplasm. The enzyme catalyses Endonucleolytic cleavage to 5'-phosphomonoester.. In terms of biological role, endonuclease that specifically degrades the RNA of RNA-DNA hybrids. This chain is Ribonuclease HII, found in Nanoarchaeum equitans (strain Kin4-M).